We begin with the raw amino-acid sequence, 264 residues long: 3-methyl-2-oxobutanoate hydroxymethyltransferase (264 aa).

Residues Asp45 and Asp84 each contribute to the Mg(2+) site. 3-methyl-2-oxobutanoate-binding positions include 45 to 46 (DS), Asp84, and Lys112. Glu114 provides a ligand contact to Mg(2+). Glu181 (proton acceptor) is an active-site residue.

Belongs to the PanB family. As to quaternary structure, homodecamer; pentamer of dimers. Requires Mg(2+) as cofactor.

The protein resides in the cytoplasm. The enzyme catalyses 3-methyl-2-oxobutanoate + (6R)-5,10-methylene-5,6,7,8-tetrahydrofolate + H2O = 2-dehydropantoate + (6S)-5,6,7,8-tetrahydrofolate. Its pathway is cofactor biosynthesis; (R)-pantothenate biosynthesis; (R)-pantoate from 3-methyl-2-oxobutanoate: step 1/2. In terms of biological role, catalyzes the reversible reaction in which hydroxymethyl group from 5,10-methylenetetrahydrofolate is transferred onto alpha-ketoisovalerate to form ketopantoate. The sequence is that of 3-methyl-2-oxobutanoate hydroxymethyltransferase from Shewanella sp. (strain ANA-3).